A 187-amino-acid chain; its full sequence is MCAARQILLLLLAFLAYALDSAAAYGTAETLCGGELVDTLQFVCGDRGFYFSRPVGRNNRRINRGIVEECCFRSCDLALLETYCAKSVKSERDLSATSLAGLPALNKESFQKPSHAKYSKYNVWQKKSSQRLQREVPGILRARRYRWQAEGLQAAEEARAMHRPLISLPSQRPPAPRASPEATGPQE.

The N-terminal stretch at 1–23 is a signal peptide; that stretch reads MCAARQILLLLLAFLAYALDSAA. The b stretch occupies residues 25–51; it reads YGTAETLCGGELVDTLQFVCGDRGFYF. 3 disulfide bridges follow: cysteine 32/cysteine 71, cysteine 44/cysteine 84, and cysteine 70/cysteine 75. A c region spans residues 52–64; sequence SRPVGRNNRRINR. Positions 64–85 are a; the sequence is RGIVEECCFRSCDLALLETYCA. The d stretch occupies residues 86-91; sequence KSVKSE. Residues 92–187 constitute a propeptide, e peptide; the sequence is RDLSATSLAG…ASPEATGPQE (96 aa). The disordered stretch occupies residues 162–187; it reads HRPLISLPSQRPPAPRASPEATGPQE.

This sequence belongs to the insulin family.

Its subcellular location is the secreted. The insulin-like growth factors, isolated from plasma, are structurally and functionally related to insulin but have a much higher growth-promoting activity. Acts as a ligand for integrin which is required for IGF2 signaling. The protein is Insulin-like growth factor 2 of Gallus gallus (Chicken).